Consider the following 283-residue polypeptide: Orotidine 5'-phosphate decarboxylase (283 aa).

Lys-97 acts as the Proton donor in catalysis.

This sequence belongs to the OMP decarboxylase family. Type 2 subfamily.

The enzyme catalyses orotidine 5'-phosphate + H(+) = UMP + CO2. Its pathway is pyrimidine metabolism; UMP biosynthesis via de novo pathway; UMP from orotate: step 2/2. The protein is Orotidine 5'-phosphate decarboxylase of Clostridium botulinum (strain Kyoto / Type A2).